A 477-amino-acid polypeptide reads, in one-letter code: Aspartyl/glutamyl-tRNA(Asn/Gln) amidotransferase subunit B (477 aa).

Belongs to the GatB/GatE family. GatB subfamily. Heterotrimer of A, B and C subunits.

The enzyme catalyses L-glutamyl-tRNA(Gln) + L-glutamine + ATP + H2O = L-glutaminyl-tRNA(Gln) + L-glutamate + ADP + phosphate + H(+). It carries out the reaction L-aspartyl-tRNA(Asn) + L-glutamine + ATP + H2O = L-asparaginyl-tRNA(Asn) + L-glutamate + ADP + phosphate + 2 H(+). Its function is as follows. Allows the formation of correctly charged Asn-tRNA(Asn) or Gln-tRNA(Gln) through the transamidation of misacylated Asp-tRNA(Asn) or Glu-tRNA(Gln) in organisms which lack either or both of asparaginyl-tRNA or glutaminyl-tRNA synthetases. The reaction takes place in the presence of glutamine and ATP through an activated phospho-Asp-tRNA(Asn) or phospho-Glu-tRNA(Gln). This is Aspartyl/glutamyl-tRNA(Asn/Gln) amidotransferase subunit B from Lawsonia intracellularis (strain PHE/MN1-00).